The chain runs to 206 residues: Sclerostin domain-containing protein 1 (206 aa).

The first 23 residues, 1 to 23, serve as a signal peptide directing secretion; the sequence is MLPPAIHFYLLPLACILMKSCLA. N-linked (GlcNAc...) asparagine glycosylation occurs at Asn-47. 4 disulfides stabilise this stretch: Cys-75-Cys-133, Cys-89-Cys-147, Cys-100-Cys-163, and Cys-104-Cys-165. The CTCK domain maps to 75-170; that stretch reads CRELRSTKYI…TACKCKRYTR (96 aa). Residue Asn-173 is glycosylated (N-linked (GlcNAc...) asparagine). The tract at residues 174 to 206 is disordered; that stretch reads ESSHNFESMSPAKPVQHHRERKRASKSSKHSMS. Residues 188–206 are compositionally biased toward basic residues; that stretch reads VQHHRERKRASKSSKHSMS.

Belongs to the sclerostin family. Interacts with BMP2, BMP4, BMP6 and BMP7 with high affinity. As to expression, highly expressed in kidney and weakly in lung.

The protein localises to the secreted. Functionally, may be involved in the onset of endometrial receptivity for implantation/sensitization for the decidual cell reaction Enhances Wnt signaling and inhibits TGF-beta signaling. Directly antagonizes activity of BMP2, BMP4, BMP6 and BMP7 in a dose-dependent manner. The protein is Sclerostin domain-containing protein 1 (SOSTDC1) of Homo sapiens (Human).